A 176-amino-acid polypeptide reads, in one-letter code: ATP synthase subunit delta (176 aa).

Belongs to the ATPase delta chain family. In terms of assembly, F-type ATPases have 2 components, F(1) - the catalytic core - and F(0) - the membrane proton channel. F(1) has five subunits: alpha(3), beta(3), gamma(1), delta(1), epsilon(1). F(0) has three main subunits: a(1), b(2) and c(10-14). The alpha and beta chains form an alternating ring which encloses part of the gamma chain. F(1) is attached to F(0) by a central stalk formed by the gamma and epsilon chains, while a peripheral stalk is formed by the delta and b chains.

It is found in the cell inner membrane. Functionally, f(1)F(0) ATP synthase produces ATP from ADP in the presence of a proton or sodium gradient. F-type ATPases consist of two structural domains, F(1) containing the extramembraneous catalytic core and F(0) containing the membrane proton channel, linked together by a central stalk and a peripheral stalk. During catalysis, ATP synthesis in the catalytic domain of F(1) is coupled via a rotary mechanism of the central stalk subunits to proton translocation. In terms of biological role, this protein is part of the stalk that links CF(0) to CF(1). It either transmits conformational changes from CF(0) to CF(1) or is implicated in proton conduction. The chain is ATP synthase subunit delta from Campylobacter fetus subsp. fetus (strain 82-40).